The chain runs to 1728 residues: Hybrid PKS-NRPS synthetase TAS1 (1728 aa).

Positions 153-499 (SPLSKAQMAL…MDPTLLDFKV (347 aa)) are condensation (C) domain. The segment at 608 to 1002 (KARAASQPDL…KLHIQGRIGN (395 aa)) is adenylation (A) domain. The 79-residue stretch at 1141 to 1219 (MLRRHLTAEV…KQVDCLMGIV (79 aa)) folds into the Carrier domain. S1177 is modified (O-(pantetheine 4'-phosphoryl)serine). The disordered stretch occupies residues 1225–1256 (LGSEPTGGSSSRSQSRRSAETSSSSTSAPSSV). Composition is skewed to low complexity over residues 1226–1237 (GSEPTGGSSSRS) and 1244–1255 (ETSSSSTSAPSS). A Ketosynthase family 3 (KS3) domain is found at 1262–1714 (RNLYAIVGIS…SDATWFVIST (453 aa)). Catalysis depends on for beta-ketoacyl synthase activity residues C1436, H1579, and N1633.

It in the N-terminal section; belongs to the NRP synthetase family. Pantetheine 4'-phosphate serves as cofactor.

It catalyses the reaction acetoacetyl-CoA + L-isoleucine + ATP = tenuazonic acid + AMP + diphosphate + CoA + 2 H(+). Its function is as follows. Hybrid PKS-NRPS synthetase that mediates the biosynthesis of the toxin tenuazonic acid (TeA), an inhibitor of protein biosynthesis on ribosomes by suppressing the release of new protein. TAS1 alone is sufficient for TeA synthesis via the condensation of isoleucine (Ile) with acetoacetyl-CoA by the N-terminal NRPS module and subsequent cyclization conducted by the C-terminal KS domain. The protein is Hybrid PKS-NRPS synthetase TAS1 of Pyricularia oryzae (strain 70-15 / ATCC MYA-4617 / FGSC 8958) (Rice blast fungus).